The chain runs to 55 residues: Large ribosomal subunit protein bL33 (55 aa).

It belongs to the bacterial ribosomal protein bL33 family.

The protein is Large ribosomal subunit protein bL33 of Methylacidiphilum infernorum (isolate V4) (Methylokorus infernorum (strain V4)).